A 274-amino-acid polypeptide reads, in one-letter code: MTASALAYLEPDSSAELTGVYHLVLDRPEARNAISRSLLQDVLQCLQVLVCKITQPKQDEPLPRVLILRANGPCFCAGADLKERREMSEAEVIEFLQDLRHMLEQVEKLPIPTLAAIDGPALGGGLELALACDFRIAAETVSKIGFPEVKLGIIPGAGGTQRAPRIIGMQRAKELIYTGTQLNATQAKDLGLIDHVAPGSTCLKLCQELAQQMMPSAPLALRAAKMAISMGANVELARGLDLEWACYEPLLESKDRREALDAFQQKRKPIFTGK.

Substrate contacts are provided by residues 77–81 (AGADL) and glycine 124. The stretch at 79-109 (ADLKERREMSEAEVIEFLQDLRHMLEQVEKL) forms a coiled coil.

Belongs to the enoyl-CoA hydratase/isomerase family.

It catalyses the reaction a (3S)-3-hydroxyacyl-CoA = a (2E)-enoyl-CoA + H2O. The catalysed reaction is a 4-saturated-(3S)-3-hydroxyacyl-CoA = a (3E)-enoyl-CoA + H2O. It functions in the pathway siderophore biosynthesis. Its function is as follows. Enoyl-CoA isomerase/hydratase; part of the gene cluster that mediates the biosynthesis of siderophore ferrichrome A which is contributing to organismal virulence. The first step of ferrichrome A biosynthesis is performed by the HMG-CoA synthase hcs1 which catalyzes the generation of HMG-CoA and CoA using acetoacetyl-CoA and acetyl-CoA as substrates. The enoyl-CoA isomerase/hydratase fer4 then catalyzes the conversion of hcs1-produced HMG-CoA to methylglutaconyl-CoA. The acyltransferase fer5 then fuses the fer4-generated methylglutaconyl-CoA with sid1-generated hydroxyornithine to yield methylglutaconyl hydroxyornithine. Methylglutaconyl hydroxyornithine is then available for use by the NRPS fer3 to generate ferrichrome A. This is Enoyl-CoA isomerase/hydratase fer4 from Mycosarcoma maydis (Corn smut fungus).